Reading from the N-terminus, the 101-residue chain is Large ribosomal subunit protein uL24 (101 aa).

This sequence belongs to the universal ribosomal protein uL24 family. Part of the 50S ribosomal subunit.

One of two assembly initiator proteins, it binds directly to the 5'-end of the 23S rRNA, where it nucleates assembly of the 50S subunit. Functionally, one of the proteins that surrounds the polypeptide exit tunnel on the outside of the subunit. The polypeptide is Large ribosomal subunit protein uL24 (Borreliella burgdorferi (strain ATCC 35210 / DSM 4680 / CIP 102532 / B31) (Borrelia burgdorferi)).